The sequence spans 300 residues: Nuclear egress protein 1 (300 aa).

Residues 90–217 form a CCCH-type zinc finger; it reads CLSLSGMGYY…YIVFPGKALH (128 aa).

This sequence belongs to the herpesviridae NEC1 protein family. In terms of assembly, forms a heterohexameric complex with NEC2. Interacts with capsid vertex specific component 2/CVC2; this interaction directs the capsid to the host inner nuclear membrane to initiate budding. Post-translationally, phosphorylated at serine residues in the N-terminus. This phosphorylation regulates the localization within the inner nuclear membrane.

Its subcellular location is the host nucleus inner membrane. Plays an essential role in virion nuclear egress, the first step of virion release from infected cell. Within the host nucleus, NEC1 interacts with the newly formed capsid through the vertexes and directs it to the inner nuclear membrane by associating with NEC2. Induces the budding of the capsid at the inner nuclear membrane as well as its envelopment into the perinuclear space. There, the NEC1/NEC2 complex promotes the fusion of the enveloped capsid with the outer nuclear membrane and the subsequent release of the viral capsid into the cytoplasm where it will reach the secondary budding sites in the host Golgi or trans-Golgi network. This is Nuclear egress protein 1 from Gallid herpesvirus 2 (strain Chicken/Md5/ATCC VR-987) (GaHV-2).